The primary structure comprises 104 residues: LHDPCDNTEDCEDGLECNRNKCLIPYDSDKTCETGWDCVHGVWCSSFPGGSPGCRMDYRCKNEQCEDPATECVDEICGRKEGERCIGPCKAGLTCRNGYCRKPW.

In terms of processing, contains 8 disulfide bonds. Expressed by the venom duct.

The protein resides in the secreted. In terms of biological role, acts as a neurotoxin by inhibiting an ion channel. The chain is Turripeptide OL55-like from Iotyrris cingulifera (Sea snail).